Here is a 574-residue protein sequence, read N- to C-terminus: Desiccation/radiation resistance protein DR_1769 (574 aa).

Residues 1–33 (MPDPAARRFSLPPFPLAALALSVALLGAPASLA) form the signal peptide. The segment covering 400–438 (TAQTQARQAAAAASTSQQPRLPTLAQAPAPTPAPAQTTP) has biased composition (low complexity). The interval 400–461 (TAQTQARQAA…APVPPVASPA (62 aa)) is disordered. Residues 439-459 (RPQPTPAQPATPAAPVPPVAS) show a composition bias toward pro residues.

Plays an important role in resistance to desiccation and radiation, maybe by protecting genome integrity under extreme conditions. The protein is Desiccation/radiation resistance protein DR_1769 of Deinococcus radiodurans (strain ATCC 13939 / DSM 20539 / JCM 16871 / CCUG 27074 / LMG 4051 / NBRC 15346 / NCIMB 9279 / VKM B-1422 / R1).